The sequence spans 119 residues: NADH-quinone oxidoreductase subunit A (119 aa).

The next 3 membrane-spanning stretches (helical) occupy residues 9-29, 63-83, and 88-108; these read VLLFILVGIGVGVVPLVLGYV, LVAILFILFDLEIAFLFPWAV, and VGMTGFVAVIVFLAILVVGFA.

This sequence belongs to the complex I subunit 3 family. NDH-1 is composed of 14 different subunits. Subunits NuoA, H, J, K, L, M, N constitute the membrane sector of the complex.

The protein localises to the cell inner membrane. The catalysed reaction is a quinone + NADH + 5 H(+)(in) = a quinol + NAD(+) + 4 H(+)(out). Functionally, NDH-1 shuttles electrons from NADH, via FMN and iron-sulfur (Fe-S) centers, to quinones in the respiratory chain. The immediate electron acceptor for the enzyme in this species is believed to be ubiquinone. Couples the redox reaction to proton translocation (for every two electrons transferred, four hydrogen ions are translocated across the cytoplasmic membrane), and thus conserves the redox energy in a proton gradient. This chain is NADH-quinone oxidoreductase subunit A, found in Paracidovorax citrulli (strain AAC00-1) (Acidovorax citrulli).